Consider the following 455-residue polypeptide: Regulatory protein LuxO (455 aa).

One can recognise a Response regulatory domain in the interval methionine 1–isoleucine 112. A 4-aspartylphosphate modification is found at aspartate 47. The Sigma-54 factor interaction domain maps to phenylalanine 132 to valine 361. Residues glycine 160–glutamate 167 and alanine 223–glutamate 232 each bind ATP.

In terms of biological role, involved in the regulation of different processes depending on the cell density. Acts together with sigma-54 to repress, perhaps indirectly, some genes. In Vibrio cholerae serotype O1 (strain ATCC 39315 / El Tor Inaba N16961), this protein is Regulatory protein LuxO (luxO).